Here is a 368-residue protein sequence, read N- to C-terminus: MSILEKVQPIETMLPERYYTMSTEDMEKRVREIKEKMGETLFIPGHHYQKDEVVQFSDAAGDSLQLAQVAASNKEAKYIVFCGVHFMAETADMLTTDEQVVILPDMRAGCSMADMADIEQTERAWKELTKLFGDTMIPLTYVNSTAAIKAFCGRNGGATVTSSNAKQMVSWAFTQKERLVFLPDQHLGRNTAYDLGIPLDKMAVWDPHTDSLEYDGDIEEIQVILWKGHCSVHQNFTVKNIENVRKNHPDMNIIVHPECCYEVVAASDYAGSTKYIIDMIELAPSGSKWAIGTEMNLVNRIIQQHPDKEIVSLNPFMCPCLTMNRIDLPHLLWALETIERGEEINVISVDKQVTEEAVLALNRMLERV.

Iminosuccinate-binding residues include His46 and Ser63. Cys110 contributes to the [4Fe-4S] cluster binding site. Residues 141–143 (YVN) and Ser162 each bind iminosuccinate. A [4Fe-4S] cluster-binding site is contributed by Cys230. Iminosuccinate contacts are provided by residues 256-258 (HPE) and Thr273. Cys320 is a [4Fe-4S] cluster binding site.

It belongs to the quinolinate synthase family. Type 3 subfamily. It depends on [4Fe-4S] cluster as a cofactor.

Its subcellular location is the cytoplasm. It catalyses the reaction iminosuccinate + dihydroxyacetone phosphate = quinolinate + phosphate + 2 H2O + H(+). It functions in the pathway cofactor biosynthesis; NAD(+) biosynthesis; quinolinate from iminoaspartate: step 1/1. In terms of biological role, catalyzes the condensation of iminoaspartate with dihydroxyacetone phosphate to form quinolinate. The sequence is that of Quinolinate synthase from Bacillus thuringiensis (strain Al Hakam).